A 1202-amino-acid chain; its full sequence is Liprin-alpha-1 (1202 aa).

Positions 1–33 are disordered; the sequence is MMCEVMPTISEAEGPPGGGGGHGSGSPSQPDAD. The span at 15–24 shows a compositional bias: gly residues; that stretch reads PPGGGGGHGS. Residues 34–141 adopt a coiled-coil conformation; the sequence is SHFEQLMVSM…VSRHERSLRM (108 aa). Phosphoserine is present on Ser-150. Residues 176-214 adopt a coiled-coil conformation; it reads EKVRERLRVALERCSLLEEELGATHKELMILKEQNNQKK. Disordered stretches follow at residues 224–245 and 426–446; these read NHEQ…SLSH and KNQE…HNKR. Thr-230 carries the post-translational modification Phosphothreonine. Residues Ser-239, Ser-242, and Ser-244 each carry the phosphoserine modification. 2 coiled-coil regions span residues 249 to 521 and 623 to 669; these read LAKV…GASL and ADAH…SGSL. Ser-448 carries the phosphoserine modification. Positions 651–662 are enriched in basic and acidic residues; sequence ENTEQRAEEIES. The segment at 651 to 855 is disordered; the sequence is ENTEQRAEEI…SKLGGQAEKN (205 aa). A phosphoserine mark is found at Ser-666, Ser-668, and Ser-693. A compositionally biased stretch (low complexity) spans 686-700; the sequence is ASSLASSSPPGSGRS. Residues 725–736 show a composition bias toward basic and acidic residues; sequence SREEVRDDKTTI. Residue Thr-761 is modified to Phosphothreonine. A compositionally biased stretch (basic and acidic residues) spans 762–771; the sequence is VSHEDIRDIR. Position 763 is a phosphoserine (Ser-763). The segment covering 832–841 has biased composition (polar residues); it reads VSETDNSSQD. Residues 847-871 adopt a coiled-coil conformation; that stretch reads KLGGQAEKNRKLQKKHELLEEARRQ. SAM domains lie at 878–944, 963–1027, and 1051–1120; these read WDGP…IMSL, NHEW…LRRL, and WSND…LLVM. Residues 1021–1050 are a coiled coil; the sequence is IMCLRRLNYDRKELERKREESQSEIKDVLV. Phosphoserine is present on Ser-1133. Position 1159 is a phosphothreonine (Thr-1159). Residues 1163 to 1202 form a disordered region; it reads NFRVTSSMSSPSMQPKKMQMDGNVSGTQRLDSATVRTYSC. Positions 1168-1179 are enriched in low complexity; sequence SSMSSPSMQPKK. A compositionally biased stretch (polar residues) spans 1184–1202; sequence GNVSGTQRLDSATVRTYSC.

The protein belongs to the liprin family. Liprin-alpha subfamily. In terms of assembly, homodimer. Interacts with PTPRF (via D2 domain). Part of a cortical microtubule stabilization complex (CMSC) composed of KANK1, PPFIA1, PPFIBP1, ERC1/ELKS, PHLDB2/LL5beta, CLASPs, KIF21A and possibly additional interactors; within CMSCs KANK1 and PHLDB2/LL5beta seem to be the core components for recruiting microtubule-binding proteins KIF21A and CLASPs, whereas PPFIA1, PPFIBP1 and ERC1/ELKS serve as scaffolds for protein clustering. As to expression, ubiquitous.

Its subcellular location is the cytoplasm. The protein localises to the cell cortex. In terms of biological role, may regulate the disassembly of focal adhesions. May localize receptor-like tyrosine phosphatases type 2A at specific sites on the plasma membrane, possibly regulating their interaction with the extracellular environment and their association with substrates. This Homo sapiens (Human) protein is Liprin-alpha-1 (PPFIA1).